Reading from the N-terminus, the 615-residue chain is 1-deoxy-D-xylulose-5-phosphate synthase (615 aa).

Residues histidine 72 and 111-113 contribute to the thiamine diphosphate site; that span reads GHS. Position 142 (aspartate 142) interacts with Mg(2+). Thiamine diphosphate is bound by residues 143 to 144, asparagine 171, tyrosine 278, and glutamate 360; that span reads GA. Asparagine 171 provides a ligand contact to Mg(2+).

It belongs to the transketolase family. DXPS subfamily. As to quaternary structure, homodimer. The cofactor is Mg(2+). It depends on thiamine diphosphate as a cofactor.

The enzyme catalyses D-glyceraldehyde 3-phosphate + pyruvate + H(+) = 1-deoxy-D-xylulose 5-phosphate + CO2. Its pathway is metabolic intermediate biosynthesis; 1-deoxy-D-xylulose 5-phosphate biosynthesis; 1-deoxy-D-xylulose 5-phosphate from D-glyceraldehyde 3-phosphate and pyruvate: step 1/1. In terms of biological role, catalyzes the acyloin condensation reaction between C atoms 2 and 3 of pyruvate and glyceraldehyde 3-phosphate to yield 1-deoxy-D-xylulose-5-phosphate (DXP). The polypeptide is 1-deoxy-D-xylulose-5-phosphate synthase (Campylobacter jejuni subsp. doylei (strain ATCC BAA-1458 / RM4099 / 269.97)).